Consider the following 957-residue polypeptide: Glycine dehydrogenase (decarboxylating) (957 aa).

At K708 the chain carries N6-(pyridoxal phosphate)lysine.

It belongs to the GcvP family. In terms of assembly, the glycine cleavage system is composed of four proteins: P, T, L and H. Pyridoxal 5'-phosphate serves as cofactor.

It catalyses the reaction N(6)-[(R)-lipoyl]-L-lysyl-[glycine-cleavage complex H protein] + glycine + H(+) = N(6)-[(R)-S(8)-aminomethyldihydrolipoyl]-L-lysyl-[glycine-cleavage complex H protein] + CO2. Its function is as follows. The glycine cleavage system catalyzes the degradation of glycine. The P protein binds the alpha-amino group of glycine through its pyridoxal phosphate cofactor; CO(2) is released and the remaining methylamine moiety is then transferred to the lipoamide cofactor of the H protein. This Cronobacter sakazakii (strain ATCC BAA-894) (Enterobacter sakazakii) protein is Glycine dehydrogenase (decarboxylating).